Reading from the N-terminus, the 366-residue chain is Protein FAM131A (366 aa).

The disordered stretch occupies residues 342–366 (QRQASDLASSGVVSLDEDEAEPEEQ). Over residues 356-366 (LDEDEAEPEEQ) the composition is skewed to acidic residues.

Belongs to the FAM131 family.

The sequence is that of Protein FAM131A (FAM131A) from Homo sapiens (Human).